Consider the following 375-residue polypeptide: Succinyl-diaminopimelate desuccinylase (375 aa).

H66 provides a ligand contact to Zn(2+). Residue D68 is part of the active site. D99 contacts Zn(2+). The Proton acceptor role is filled by E133. 3 residues coordinate Zn(2+): E134, E162, and H348.

The protein belongs to the peptidase M20A family. DapE subfamily. As to quaternary structure, homodimer. Requires Zn(2+) as cofactor. The cofactor is Co(2+).

It carries out the reaction N-succinyl-(2S,6S)-2,6-diaminopimelate + H2O = (2S,6S)-2,6-diaminopimelate + succinate. It participates in amino-acid biosynthesis; L-lysine biosynthesis via DAP pathway; LL-2,6-diaminopimelate from (S)-tetrahydrodipicolinate (succinylase route): step 3/3. Functionally, catalyzes the hydrolysis of N-succinyl-L,L-diaminopimelic acid (SDAP), forming succinate and LL-2,6-diaminopimelate (DAP), an intermediate involved in the bacterial biosynthesis of lysine and meso-diaminopimelic acid, an essential component of bacterial cell walls. The chain is Succinyl-diaminopimelate desuccinylase from Shigella dysenteriae serotype 1 (strain Sd197).